The sequence spans 496 residues: MTVATQNLTALDVGLAWRNSFAQLGKSFYTPLAPWPLPAPYWVGRSTSTARELGLSESWLDSPELLQVLTGNQPMAGTQPLASVYSGHQFGQWAGQLGDGRAILLGETGGLEVQLKGSGLTPYSRMGDGRAVLRSSIREFLCSEAMQGLGIATSRALCVVGSDAPIRRETVETAAVVTRVAPSFIRFGHFEHFSHHDQHAQLKVLADYVIDRFYPECRASDKFAGNPYAALLEAVSERTAALVAQWQAVGFCHGVLNTDNMSILGLTIDYGPFQFLDAFNPGHVCNHSDQEGRYAFDKQPNIAYWNLFCLGQALLPLIGEQELAIAALESYKTVFPAAFERLMFAKLGLLDASDSTATVDRALLQDILQLLAREQVDYTIFWRRLSHCGVATDAQTVRDLFVDRSAADAWLLRYSERLEHIPQGLAADLMLKTNPKFVLRNYLGEQAIQAAKLKDFSQVETLLMLLESPFEEHPGFDKYADFPPDWASSIEISCSS.

ATP contacts are provided by G98, G100, R101, K116, D128, G129, R179, and R186. Catalysis depends on D259, which acts as the Proton acceptor. The Mg(2+) site is built by N260 and D269. D269 serves as a coordination point for ATP.

The protein belongs to the SELO family. Mg(2+) is required as a cofactor. It depends on Mn(2+) as a cofactor.

The enzyme catalyses L-seryl-[protein] + ATP = 3-O-(5'-adenylyl)-L-seryl-[protein] + diphosphate. It catalyses the reaction L-threonyl-[protein] + ATP = 3-O-(5'-adenylyl)-L-threonyl-[protein] + diphosphate. The catalysed reaction is L-tyrosyl-[protein] + ATP = O-(5'-adenylyl)-L-tyrosyl-[protein] + diphosphate. It carries out the reaction L-histidyl-[protein] + UTP = N(tele)-(5'-uridylyl)-L-histidyl-[protein] + diphosphate. The enzyme catalyses L-seryl-[protein] + UTP = O-(5'-uridylyl)-L-seryl-[protein] + diphosphate. It catalyses the reaction L-tyrosyl-[protein] + UTP = O-(5'-uridylyl)-L-tyrosyl-[protein] + diphosphate. In terms of biological role, nucleotidyltransferase involved in the post-translational modification of proteins. It can catalyze the addition of adenosine monophosphate (AMP) or uridine monophosphate (UMP) to a protein, resulting in modifications known as AMPylation and UMPylation. This chain is Protein nucleotidyltransferase YdiU, found in Albidiferax ferrireducens (strain ATCC BAA-621 / DSM 15236 / T118) (Rhodoferax ferrireducens).